The primary structure comprises 310 residues: Thiamine-monophosphate kinase (310 aa).

Mg(2+) contacts are provided by Asp-24, Thr-38, and Asp-39. Residue Asp-46 participates in substrate binding. 2 residues coordinate Mg(2+): Asp-67 and Asp-115. ATP contacts are provided by residues 114–115 and Arg-138; that span reads GD. Asp-203 provides a ligand contact to Mg(2+). Position 205 (Ser-205) interacts with ATP. Position 206 (Asp-206) interacts with Mg(2+). The substrate site is built by Glu-251 and Trp-306.

This sequence belongs to the thiamine-monophosphate kinase family.

The catalysed reaction is thiamine phosphate + ATP = thiamine diphosphate + ADP. The protein operates within cofactor biosynthesis; thiamine diphosphate biosynthesis; thiamine diphosphate from thiamine phosphate: step 1/1. Functionally, catalyzes the ATP-dependent phosphorylation of thiamine-monophosphate (TMP) to form thiamine-pyrophosphate (TPP), the active form of vitamin B1. The chain is Thiamine-monophosphate kinase from Nitrosopumilus maritimus (strain SCM1).